Consider the following 908-residue polypeptide: Protein translocase subunit SecA (908 aa).

Residues Gln-87, 105–109 (GEGKT), and Asp-512 each bind ATP. The interval 865–908 (GGDDGSDEMMAHTPMIRDGDKVGRNDPCPCGSGRKYKQCHGKLS) is disordered. The segment covering 879–888 (MIRDGDKVGR) has biased composition (basic and acidic residues). Residues Cys-892, Cys-894, Cys-903, and His-904 each contribute to the Zn(2+) site. Residues 898–908 (RKYKQCHGKLS) are compositionally biased toward basic residues.

Belongs to the SecA family. Monomer and homodimer. Part of the essential Sec protein translocation apparatus which comprises SecA, SecYEG and auxiliary proteins SecDF-YajC and YidC. It depends on Zn(2+) as a cofactor.

The protein localises to the cell inner membrane. It is found in the cytoplasm. It carries out the reaction ATP + H2O + cellular proteinSide 1 = ADP + phosphate + cellular proteinSide 2.. Functionally, part of the Sec protein translocase complex. Interacts with the SecYEG preprotein conducting channel. Has a central role in coupling the hydrolysis of ATP to the transfer of proteins into and across the cell membrane, serving both as a receptor for the preprotein-SecB complex and as an ATP-driven molecular motor driving the stepwise translocation of polypeptide chains across the membrane. This Shewanella sp. (strain MR-7) protein is Protein translocase subunit SecA.